Reading from the N-terminus, the 419-residue chain is Voltage-gated potassium channel subunit beta-1 (419 aa).

The interval 1–51 (MLAARTGAAGSQIAEESSKLRKQAAFSGGSKDRSPKKASENVKDSSLSPSG) is disordered. Positions 30–43 (SKDRSPKKASENVK) are enriched in basic and acidic residues. NADP(+) is bound by residues T108, W109, Q115, and D137. Residue Y142 is the Proton donor/acceptor of the active site. Positions 210, 240, 241, 266, 295, 296, 297, 298, 299, 300, 306, 316, 375, 377, 381, 384, and 385 each coordinate NADP(+).

Belongs to the shaker potassium channel beta subunit family. In terms of assembly, homotetramer. Interaction with tetrameric potassium channel alpha subunits gives rise to a heterooctamer. Identified in potassium channel complexes containing KCNA1, KCNA2, KCNA4, KCNA5, KCNA6, KCNAB1 and KCNAB2. Part of a complex containing KCNA1, KCNA4 and LGI1; interaction with LGI1 inhibits down-regulation of KCNA1 channel activity. Interacts with the dimer formed by GNB1 and GNG2; this enhances KCNA1 binding. Interacts with SQSTM1. Detected in portal vein myocytes (at protein level).

It localises to the cytoplasm. It is found in the membrane. The protein resides in the cell membrane. The catalysed reaction is a primary alcohol + NADP(+) = an aldehyde + NADPH + H(+). It carries out the reaction a secondary alcohol + NADP(+) = a ketone + NADPH + H(+). Functionally, regulatory subunit of the voltage-gated potassium (Kv) channels composed of pore-forming and potassium-conducting alpha subunits and of regulatory beta subunits. The beta-1/KCNAB1 cytoplasmic subunit mediates closure of delayed rectifier potassium channels by physically obstructing the pore via its N-terminal domain and increases the speed of channel closure for other family members. Promotes the inactivation of KCNA1, KCNA2, KCNA4, KCNA5 and KCNA6 alpha subunit-containing channels. Displays nicotinamide adenine dinucleotide phosphate (NADPH)-dependent aldoketoreductase activity by catalyzing the NADPH-dependent reduction of a variety of endogenous aldehydes and ketones. The binding of NADPH is required for efficient down-regulation of potassium channel activity. Oxidation of the bound NADPH restrains N-terminal domain from blocking the channel, thereby decreasing N-type inactivation of potassium channel activity. In Oryctolagus cuniculus (Rabbit), this protein is Voltage-gated potassium channel subunit beta-1 (KCNAB1).